The following is a 489-amino-acid chain: MTFRHCVAVDLGASSGRVMLARYDSKHRTLTLREIHRFVNCLQKTDGFDTWDIDSLEKDIRLGLKKVCNEGILIDSIGIDTWGVDYVLLDKQGQRVGLPVSYRDNRTTGIMPQALVQIGKSEIYRRSGIQFLPFNTIYQLRALTKQQPELTAQVAHALLMPDYFSYRLTGEMNWEYTNATTTQLVNINTDDWDDTLLAWTGAKKSWFGRPSHPGNVIGDWICPQGNRIPVVAVASHDTASAVIASPLANKHSAYLSSGTWSLMGFESKMPYTTDEALAANITNEGGAEGRYRVLKNIMGLWLLQRVLKERRITDLPALIAQTEALPACRFLINPNDDRFINPDDMRAEIQAACRETDQPVPVSDAELARCIFDSLALLYADILHELANLRGEKFTQLHIVGGGCQNSLLNQLCADACGIRVMAGPVEASTLGNIGIQLMTLDELNNVDDFRQVVSANYDLTTYIPNPDSEIARHVAQFQPKRQTKELCA.

Position 13–17 (A13–R17) interacts with ATP. C68 and C222 are oxidised to a cystine. Substrate contacts are provided by residues G83 and H236 to T238. The active-site Proton acceptor is the D237. An ATP-binding site is contributed by T259. N296 contributes to the substrate binding site. Q304 provides a ligand contact to ATP. The cysteines at positions 353 and 370 are disulfide-linked. G402 is an ATP binding site. C413 and C417 are oxidised to a cystine.

The protein belongs to the rhamnulokinase family. It depends on Mg(2+) as a cofactor.

It carries out the reaction L-rhamnulose + ATP = L-rhamnulose 1-phosphate + ADP + H(+). Its pathway is carbohydrate degradation; L-rhamnose degradation; glycerone phosphate from L-rhamnose: step 2/3. Its function is as follows. Involved in the catabolism of L-rhamnose (6-deoxy-L-mannose). Catalyzes the transfer of the gamma-phosphate group from ATP to the 1-hydroxyl group of L-rhamnulose to yield L-rhamnulose 1-phosphate. The sequence is that of Rhamnulokinase from Salmonella enteritidis PT4 (strain P125109).